The following is an 890-amino-acid chain: Inter-alpha-trypsin inhibitor heavy chain H3 (890 aa).

Positions 1–20 are cleaved as a signal peptide; sequence MAFAWWPCLILALLSSLAAS. The propeptide occupies 21-34; sequence GFPRSPFRLLGKRS. A VIT domain is found at 29–158; sequence LLGKRSLPEG…KVTFELTYEE (130 aa). Residue Asn91 is glycosylated (N-linked (GlcNAc...) asparagine). The VWFA domain occupies 284-467; that stretch reads NVAFVIDISG…LQLQGFYEEV (184 aa). Residue Asn580 is glycosylated (N-linked (GlcNAc...) asparagine). An Aspartate 1-(chondroitin 4-sulfate)-ester modification is found at Asp651. Residues 652-890 constitute a propeptide that is removed on maturation; the sequence is PHFIIQIPEK…HTDYIVPNLF (239 aa).

It belongs to the ITIH family. In terms of assembly, I-alpha-I plasma protease inhibitors are assembled from one or two heavy chains (HC) and one light chain, bikunin. Pre-alpha-inhibitor (P-alpha-I) is composed of ITIH3/HC3 and bikunin. Heavy chains are linked to bikunin via chondroitin 4-sulfate esterified to the alpha-carboxyl of the C-terminal aspartate after propeptide cleavage.

It is found in the secreted. Functionally, may act as a carrier of hyaluronan in serum or as a binding protein between hyaluronan and other matrix protein, including those on cell surfaces in tissues to regulate the localization, synthesis and degradation of hyaluronan which are essential to cells undergoing biological processes. This Homo sapiens (Human) protein is Inter-alpha-trypsin inhibitor heavy chain H3 (ITIH3).